Reading from the N-terminus, the 365-residue chain is Aminomethyltransferase (365 aa).

The protein belongs to the GcvT family. The glycine cleavage system is composed of four proteins: P, T, L and H.

It catalyses the reaction N(6)-[(R)-S(8)-aminomethyldihydrolipoyl]-L-lysyl-[protein] + (6S)-5,6,7,8-tetrahydrofolate = N(6)-[(R)-dihydrolipoyl]-L-lysyl-[protein] + (6R)-5,10-methylene-5,6,7,8-tetrahydrofolate + NH4(+). In terms of biological role, the glycine cleavage system catalyzes the degradation of glycine. In Yersinia pseudotuberculosis serotype O:3 (strain YPIII), this protein is Aminomethyltransferase.